We begin with the raw amino-acid sequence, 146 residues long: Flagellar assembly factor FliW 1 (146 aa).

It belongs to the FliW family. In terms of assembly, interacts with translational regulator CsrA and flagellin(s).

The protein localises to the cytoplasm. Its function is as follows. Acts as an anti-CsrA protein, binds CsrA and prevents it from repressing translation of its target genes, one of which is flagellin. Binds to flagellin and participates in the assembly of the flagellum. The chain is Flagellar assembly factor FliW 1 from Helicobacter hepaticus (strain ATCC 51449 / 3B1).